The primary structure comprises 245 residues: Leucyl/phenylalanyl-tRNA--protein transferase (245 aa).

It belongs to the L/F-transferase family.

Its subcellular location is the cytoplasm. The catalysed reaction is N-terminal L-lysyl-[protein] + L-leucyl-tRNA(Leu) = N-terminal L-leucyl-L-lysyl-[protein] + tRNA(Leu) + H(+). It catalyses the reaction N-terminal L-arginyl-[protein] + L-leucyl-tRNA(Leu) = N-terminal L-leucyl-L-arginyl-[protein] + tRNA(Leu) + H(+). The enzyme catalyses L-phenylalanyl-tRNA(Phe) + an N-terminal L-alpha-aminoacyl-[protein] = an N-terminal L-phenylalanyl-L-alpha-aminoacyl-[protein] + tRNA(Phe). In terms of biological role, functions in the N-end rule pathway of protein degradation where it conjugates Leu, Phe and, less efficiently, Met from aminoacyl-tRNAs to the N-termini of proteins containing an N-terminal arginine or lysine. The protein is Leucyl/phenylalanyl-tRNA--protein transferase of Paraburkholderia xenovorans (strain LB400).